The primary structure comprises 233 residues: Probable transglycosylase IsaA (233 aa).

A signal peptide spans Met-1–Ala-29.

The protein belongs to the transglycosylase family. IsaA subfamily.

It localises to the secreted. In terms of biological role, is able to cleave peptidoglycan. This is Probable transglycosylase IsaA (isaA) from Staphylococcus aureus (strain Mu3 / ATCC 700698).